The sequence spans 262 residues: 3-deoxy-manno-octulosonate cytidylyltransferase (262 aa).

The protein belongs to the KdsB family.

The protein localises to the cytoplasm. It catalyses the reaction 3-deoxy-alpha-D-manno-oct-2-ulosonate + CTP = CMP-3-deoxy-beta-D-manno-octulosonate + diphosphate. Its pathway is nucleotide-sugar biosynthesis; CMP-3-deoxy-D-manno-octulosonate biosynthesis; CMP-3-deoxy-D-manno-octulosonate from 3-deoxy-D-manno-octulosonate and CTP: step 1/1. It functions in the pathway bacterial outer membrane biogenesis; lipopolysaccharide biosynthesis. In terms of biological role, activates KDO (a required 8-carbon sugar) for incorporation into bacterial lipopolysaccharide in Gram-negative bacteria. The protein is 3-deoxy-manno-octulosonate cytidylyltransferase of Blochmanniella pennsylvanica (strain BPEN).